The sequence spans 419 residues: D-amino acid dehydrogenase (419 aa).

3–17 is an FAD binding site; that stretch reads VIVLGSGVIGVASAY.

It belongs to the DadA oxidoreductase family. Requires FAD as cofactor.

It catalyses the reaction a D-alpha-amino acid + A + H2O = a 2-oxocarboxylate + AH2 + NH4(+). The protein operates within amino-acid degradation; D-alanine degradation; NH(3) and pyruvate from D-alanine: step 1/1. Oxidative deamination of D-amino acids. The polypeptide is D-amino acid dehydrogenase (Acinetobacter baylyi (strain ATCC 33305 / BD413 / ADP1)).